Consider the following 105-residue polypeptide: MTTEKIDGVSVTTQANVYFDGKCVSHNLTYPDGTKKSVGVVLPATLTFGTGAPEIMECVGGSCEYQLDGTDAWVKVGAGEKFSVPGNSKFNIRVTEAFHYICHYG.

This sequence belongs to the nucleoside phosphorylase PpnP family.

The enzyme catalyses a purine D-ribonucleoside + phosphate = a purine nucleobase + alpha-D-ribose 1-phosphate. It catalyses the reaction adenosine + phosphate = alpha-D-ribose 1-phosphate + adenine. It carries out the reaction cytidine + phosphate = cytosine + alpha-D-ribose 1-phosphate. The catalysed reaction is guanosine + phosphate = alpha-D-ribose 1-phosphate + guanine. The enzyme catalyses inosine + phosphate = alpha-D-ribose 1-phosphate + hypoxanthine. It catalyses the reaction thymidine + phosphate = 2-deoxy-alpha-D-ribose 1-phosphate + thymine. It carries out the reaction uridine + phosphate = alpha-D-ribose 1-phosphate + uracil. The catalysed reaction is xanthosine + phosphate = alpha-D-ribose 1-phosphate + xanthine. Functionally, catalyzes the phosphorolysis of diverse nucleosides, yielding D-ribose 1-phosphate and the respective free bases. Can use uridine, adenosine, guanosine, cytidine, thymidine, inosine and xanthosine as substrates. Also catalyzes the reverse reactions. This Acidovorax ebreus (strain TPSY) (Diaphorobacter sp. (strain TPSY)) protein is Pyrimidine/purine nucleoside phosphorylase.